The primary structure comprises 73 residues: Neutrophil elastase 2B (73 aa).

One can recognise a Peptidase S1 domain in the interval 1 to 73; it reads IVGGRPARPH…SGGPLVCNGL (73 aa). The active-site Charge relay system is the serine 64.

The protein belongs to the peptidase S1 family. Elastase subfamily.

Functionally, may be involved in the degradation of connective tissue in chronic lung disease. The chain is Neutrophil elastase 2B from Equus caballus (Horse).